The following is a 5068-amino-acid chain: Protein piccolo (5068 aa).

Low complexity predominate over residues 1-20; that stretch reads MGNEASLEGEGLPEGLAAAA. 2 disordered regions span residues 1-143 and 173-524; these read MGNE…DFKE and FDLI…QAPA. The segment covering 93–102 has biased composition (pro residues); the sequence is PGKPPDPGRP. Composition is skewed to basic and acidic residues over residues 111–122, 133–143, and 185–199; these read RTTDTFRSEQKL, KESKSRTDFKE, and ETTK…DQGK. Residue Ser212 is modified to Phosphoserine. The span at 232-241 shows a compositional bias: polar residues; sequence PSKSVSSQQA. Over residues 252–279 the composition is skewed to low complexity; the sequence is AKPSQQSPAQTPAQQAKPVAQQPGPAKA. Over residues 319-334 the composition is skewed to polar residues; it reads TSLQQPGPKSLAQTPG. Composition is skewed to pro residues over residues 391–407 and 416–487; these read PTKP…PQPQ and PQQP…PQPQ. The tract at residues 401 to 500 is 10 X 10 AA tandem approximate repeats of P-A-K-P-Q-P-Q-Q-P-X; it reads PAKPQPQQPV…LGKPSAQQPS (100 aa). Over residues 495–508 the composition is skewed to polar residues; it reads SAQQPSKSISQTVT. A compositionally biased stretch (low complexity) spans 515–524; it reads PPTSAAQAPA. Residues 532–556 form a C4-type zinc finger; sequence CPLCNTTELLLHTPEKANFNTCTEC. Disordered stretches follow at residues 594 to 867, 883 to 1005, 1057 to 1345, and 1364 to 1803; these read AAIP…TVTG, LIST…TELN, LGDM…PSDL, and VGEK…SDPE. A compositionally biased stretch (polar residues) spans 610 to 625; the sequence is QPATASKSPVPSQQAS. Residues 626–644 are compositionally biased toward basic and acidic residues; that stretch reads PKKELPSKQDSPKAPESKK. The span at 709 to 738 shows a compositional bias: low complexity; it reads SPSSAAATSKPAILSSQVQAQAQVTTAPPL. Over residues 782-795 the composition is skewed to basic and acidic residues; sequence ESKDPVQKKEEPKK. The span at 809 to 830 shows a compositional bias: low complexity; it reads VPKGSPTPSGTRPTTGQATPQS. Ser844 and Ser856 each carry phosphoserine. 2 stretches are compositionally biased toward polar residues: residues 856–865 and 883–893; these read SQPTTPQETV and LISTAGQQAPH. Thr860 carries the post-translational modification Phosphothreonine. The segment at 997–1020 adopts a C4-type zinc-finger fold; that stretch reads CPLCRTELNVGSQDPPNFNTCTEC. Residues 1073–1085 show a composition bias toward pro residues; it reads SPVPAPAEPPPQK. The span at 1097-1116 shows a compositional bias: basic and acidic residues; sequence KETEVKAETEKQIPEKETPS. Residue Thr1120 is modified to Phosphothreonine. Composition is skewed to basic and acidic residues over residues 1144–1165, 1172–1186, 1244–1253, and 1262–1283; these read PEKK…KKPP, LEEK…KLPP, PKDRQKESRD, and TAKE…DKSD. Polar residues predominate over residues 1290 to 1306; the sequence is PKSPQGLSDTGYSSDGI. Phosphoserine is present on residues Ser1292, Ser1302, Ser1303, Ser1332, Ser1334, Ser1337, Ser1338, and Ser1341. The segment covering 1319-1333 has biased composition (basic and acidic residues); that stretch reads SDEKDLLKGLKKDSF. A compositionally biased stretch (low complexity) spans 1334–1343; sequence SQESSPSSPS. Over residues 1374–1392 the composition is skewed to polar residues; that stretch reads PQKVSPEQPQDQQKTQTPS. The segment covering 1405-1444 has biased composition (basic and acidic residues); the sequence is KESQEKKVTSKKDSAQGFPSRKEHKENPELVDDLSPRRAS. Phosphoserine is present on residues Ser1439, Ser1451, Ser1452, Ser1454, Ser1457, Ser1481, Ser1484, Ser1505, and Ser1507. Residues 1499-1511 are compositionally biased toward acidic residues; it reads SADEDASGSEDEE. At Thr1552 the chain carries Phosphothreonine. Ser1553, Ser1563, and Ser1575 each carry phosphoserine. Residues 1566 to 1575 show a composition bias toward acidic residues; it reads DEDDETFDES. Residues 1576 to 1587 are compositionally biased toward basic and acidic residues; the sequence is PELKFRETKSQE. A compositionally biased stretch (polar residues) spans 1606-1624; the sequence is ELNSTVTDKYSAESSQKKT. Acidic residues predominate over residues 1628–1638; it reads FDEEPELEMES. Ser1638 carries the phosphoserine modification. Thr1640 carries the phosphothreonine modification. Residues Ser1642 and Ser1647 each carry the phosphoserine modification. Residues 1650–1667 are compositionally biased toward polar residues; that stretch reads EGSSSLHASSFTPGTSPT. Residues 1707–1720 show a composition bias toward acidic residues; it reads DSSEEEELREEEEL. Residues Ser1708 and Ser1709 each carry the phosphoserine modification. The span at 1721–1734 shows a compositional bias: basic and acidic residues; the sequence is LKEQEKQRELEQQQ. Thr1760 bears the Phosphothreonine mark. Ser1766 is subject to Phosphoserine. Residues 1775-1790 are compositionally biased toward basic and acidic residues; the sequence is EELRQAAEMEELHRSS. A phosphoserine mark is found at Ser1795, Ser1800, Ser1808, and Ser1829. Disordered regions lie at residues 2104-2126 and 2261-2377; these read PSES…ISSV and EAEL…AAAA. The span at 2109-2126 shows a compositional bias: low complexity; it reads TSVPPSDTPSLTSSISSV. Positions 2277–2291 are enriched in polar residues; that stretch reads TPSSQTKEQPGSPHS. The segment covering 2334-2368 has biased composition (pro residues); that stretch reads QPPPPPPPPPPPPPPPPPPPPPPLPPATSPKPPTY. The residue at position 2495 (Ser2495) is a Phosphoserine. O-linked (GlcNAc) threonine glycosylation occurs at Thr2686. O-linked (GlcNAc) serine glycosylation occurs at Ser2960. A Phosphothreonine modification is found at Thr2998. 2 disordered regions span residues 3334 to 3443 and 3490 to 3556; these read KEEK…SKVS and KGGS…LYSP. At Ser3358 the chain carries Phosphoserine. Residues 3361–3370 are compositionally biased toward basic and acidic residues; sequence DDPRNLKKIV. The residue at position 3372 (Ser3372) is a Phosphoserine. Residues Thr3376 and Thr3403 each carry the phosphothreonine modification. Residues 3403–3412 show a composition bias toward acidic residues; that stretch reads TDDEDQDEWD. Positions 3495-3507 are enriched in polar residues; the sequence is GCQTETDPDTQSP. Phosphoserine occurs at positions 3506, 3514, 3545, 3549, 3555, 3558, 3561, 3582, 3608, 3610, and 3616. 2 disordered regions span residues 3576-3679 and 3760-3797; these read PLPD…RRRM and DYMS…QFIP. Polar residues-rich tracts occupy residues 3636–3645 and 3661–3673; these read KGSQTTSGTQ and STGT…TMGT. A Phosphoserine modification is found at Ser3763. A compositionally biased stretch (basic and acidic residues) spans 3773–3785; sequence SRVESQHGIERPR. Over residues 3787–3797 the composition is skewed to polar residues; it reads APQTEFSQFIP. Phosphoserine is present on residues Ser4016, Ser4042, and Ser4132. Disordered regions lie at residues 4207–4231 and 4254–4273; these read ADKP…GLDL and VSFG…LPIS. Residues 4210–4231 are compositionally biased toward low complexity; the sequence is PYSSGSRSRPSSRPSSVYGLDL. Positions 4257–4273 are enriched in polar residues; sequence GHSSSSARTKPTSLPIS. Ser4286, Ser4290, Ser4293, Ser4322, and Ser4358 each carry phosphoserine. Positions 4317 to 4339 are disordered; the sequence is RDQFGSSHSLPEVQQHMREESRT. A PDZ domain is found at 4424–4518; that stretch reads RIKITRDSKD…EAEICVRLDL (95 aa). The disordered stretch occupies residues 4574–4620; it reads KGAHAHSGPTSAGSSSVPSPGQPGSPSVSKKKHGGSKPTDVSKTASH. Positions 4578–4601 are enriched in low complexity; sequence AHSGPTSAGSSSVPSPGQPGSPSV. Phosphoserine is present on Ser4592. The C2 1 domain maps to 4622-4751; the sequence is ITGEIQLQIN…SHLDNTPRWY (130 aa). Ca(2+) is bound by residues Asp4651 and Asp4657. A Phosphoserine modification is found at Ser4706. Positions 4721, 4723, 4726, and 4729 each coordinate Ca(2+). 2 disordered regions span residues 4758–4834 and 4857–4891; these read ESIE…SVAQ and QPTK…SEGS. 2 stretches are compositionally biased toward low complexity: residues 4766–4778 and 4805–4815; these read HSSQ…PKPS and SSPGSSKSSSE. The segment covering 4823–4834 has biased composition (polar residues); it reads PSRSQSKTSVAQ. The segment covering 4870 to 4891 has biased composition (low complexity); sequence SVSTGSSGSSVGSGYSVDSEGS. Positions 4933–5058 constitute a C2 2 domain; that stretch reads VMGEIKLALK…DLRKRIVNWH (126 aa).

Interacts with BSN, ERC2/CAST1, RIMS1 and UNC13A. Interacts (via C-terminus) with TRIO (via N-terminus). Interacts with CTBP1. Interacts with SIAH1; this interaction negatively regulates SIAH1 E3 ligase activity. Directly interacts with GIT1 and GIT2. Ca(2+) is required as a cofactor. Highly expressed in brain. Moderately expressed in pituitary gland and pancreatic islets. Low levels found in stomach.

It is found in the presynaptic active zone. In terms of biological role, scaffold protein of the presynaptic cytomatrix at the active zone (CAZ) which is the place in the synapse where neurotransmitter is released. After synthesis, participates in the formation of Golgi-derived membranous organelles termed Piccolo-Bassoon transport vesicles (PTVs) that are transported along axons to sites of nascent synaptic contacts. At the presynaptic active zone, regulates the spatial organization of synaptic vesicle cluster, the protein complexes that execute membrane fusion and compensatory endocytosis. Organizes as well the readily releasable pool of synaptic vesicles and safeguards a fraction of them to be not immediately available for action potential-induced release. Also functions in processes other than assembly such as the regulation of specific presynaptic protein ubiquitination by interacting with SIAH1 or the regulation of presynaptic autophagy. Also mediates synapse to nucleus communication leading to reconfiguration of gene expression by associating with the transcriptional corepressor CTBP1 and by subsequently reducing the size of its pool available for nuclear import. The sequence is that of Protein piccolo from Mus musculus (Mouse).